The following is a 511-amino-acid chain: Glucans biosynthesis protein G (511 aa).

The N-terminal stretch at 1-22 (MMKMRWLSAAVMLTLYTSSSWA) is a signal peptide.

Belongs to the OpgD/OpgG family.

The protein localises to the periplasm. Its pathway is glycan metabolism; osmoregulated periplasmic glucan (OPG) biosynthesis. Functionally, involved in the biosynthesis of osmoregulated periplasmic glucans (OPGs). This is Glucans biosynthesis protein G from Escherichia coli O8 (strain IAI1).